Here is a 23-residue protein sequence, read N- to C-terminus: GCWICWGPNACCRGSVCHDYCPS.

3 cysteine pairs are disulfide-bonded: Cys-2-Cys-12, Cys-5-Cys-17, and Cys-11-Cys-21.

In terms of tissue distribution, expressed by the venom duct.

The protein resides in the secreted. This chain is Conotoxin Cl6c, found in Californiconus californicus (California cone).